The primary structure comprises 225 residues: Biosynthetic peptidoglycan transglycosylase (225 aa).

Residues 8–28 (VLLIFIGAILLIQLWIFSSLV) form a helical membrane-spanning segment.

This sequence belongs to the glycosyltransferase 51 family.

It localises to the cell inner membrane. It carries out the reaction [GlcNAc-(1-&gt;4)-Mur2Ac(oyl-L-Ala-gamma-D-Glu-L-Lys-D-Ala-D-Ala)](n)-di-trans,octa-cis-undecaprenyl diphosphate + beta-D-GlcNAc-(1-&gt;4)-Mur2Ac(oyl-L-Ala-gamma-D-Glu-L-Lys-D-Ala-D-Ala)-di-trans,octa-cis-undecaprenyl diphosphate = [GlcNAc-(1-&gt;4)-Mur2Ac(oyl-L-Ala-gamma-D-Glu-L-Lys-D-Ala-D-Ala)](n+1)-di-trans,octa-cis-undecaprenyl diphosphate + di-trans,octa-cis-undecaprenyl diphosphate + H(+). It participates in cell wall biogenesis; peptidoglycan biosynthesis. In terms of biological role, peptidoglycan polymerase that catalyzes glycan chain elongation from lipid-linked precursors. The sequence is that of Biosynthetic peptidoglycan transglycosylase from Acinetobacter baumannii (strain ACICU).